The following is a 278-amino-acid chain: MATH domain and coiled-coil domain-containing protein At1g31400 (278 aa).

One can recognise an MATH domain in the interval 6 to 131 (EKRITWTIKN…SGQVKIVAEV (126 aa)). Residues 232-267 (KLDWLEKKLKEVGKTRMQQLEQNLKDLKESLCWSSD) are a coiled coil.

The chain is MATH domain and coiled-coil domain-containing protein At1g31400 from Arabidopsis thaliana (Mouse-ear cress).